Consider the following 493-residue polypeptide: Glutamyl-tRNA(Gln) amidotransferase subunit A (493 aa).

Residues Lys79 and Ser159 each act as charge relay system in the active site. The active-site Acyl-ester intermediate is Ser183.

Belongs to the amidase family. GatA subfamily. In terms of assembly, heterotrimer of A, B and C subunits.

It catalyses the reaction L-glutamyl-tRNA(Gln) + L-glutamine + ATP + H2O = L-glutaminyl-tRNA(Gln) + L-glutamate + ADP + phosphate + H(+). In terms of biological role, allows the formation of correctly charged Gln-tRNA(Gln) through the transamidation of misacylated Glu-tRNA(Gln) in organisms which lack glutaminyl-tRNA synthetase. The reaction takes place in the presence of glutamine and ATP through an activated gamma-phospho-Glu-tRNA(Gln). In Rhizobium meliloti (strain 1021) (Ensifer meliloti), this protein is Glutamyl-tRNA(Gln) amidotransferase subunit A.